The primary structure comprises 314 residues: Hydroxyacyl-coenzyme A dehydrogenase, mitochondrial (314 aa).

The transit peptide at methionine 1–leucine 12 directs the protein to the mitochondrion. NAD(+) is bound by residues glycine 34–glycine 39 and aspartate 57. The CoA site is built by serine 73 and lysine 80. Lysine 80 is subject to N6-succinyllysine. 2 positions are modified to N6-acetyllysine; alternate: lysine 81 and lysine 87. N6-succinyllysine; alternate is present on residues lysine 81 and lysine 87. Glutamate 122 lines the NAD(+) pocket. Lysine 125 is subject to N6-acetyllysine. Lysine 127 provides a ligand contact to NAD(+). Residue lysine 127 is modified to N6-(2-hydroxyisobutyryl)lysine. At lysine 136 the chain carries N6-acetyllysine; alternate. At lysine 136 the chain carries N6-succinyllysine; alternate. Serine 149 and asparagine 173 together coordinate NAD(+). Serine 149 provides a ligand contact to CoA. Lysine 179 carries the N6-acetyllysine modification. Lysine 185, lysine 192, and lysine 202 each carry N6-acetyllysine; alternate. Residues lysine 185, lysine 192, and lysine 202 each carry the N6-succinyllysine; alternate modification. An N6-succinyllysine modification is found at lysine 206. An N6-acetyllysine; alternate mark is found at lysine 212 and lysine 241. N6-succinyllysine; alternate occurs at positions 212 and 241. Residue lysine 305 coordinates NAD(+). At lysine 312 the chain carries N6-acetyllysine; alternate. Position 312 is an N6-succinyllysine; alternate (lysine 312).

This sequence belongs to the 3-hydroxyacyl-CoA dehydrogenase family. In terms of assembly, homodimer. Interacts with GLUD1; this interaction inhibits the activation of glutamate dehydrogenase 1 (GLUD1). In terms of processing, succinylation at Lys-81, adjacent to a coenzyme A binding site. Desuccinylated by SIRT5.

It localises to the mitochondrion matrix. It catalyses the reaction a (3S)-3-hydroxyacyl-CoA + NAD(+) = a 3-oxoacyl-CoA + NADH + H(+). It carries out the reaction (3S)-3-hydroxybutanoyl-CoA + NAD(+) = acetoacetyl-CoA + NADH + H(+). The catalysed reaction is (3S)-hydroxydecanoyl-CoA + NAD(+) = 3-oxodecanoyl-CoA + NADH + H(+). The enzyme catalyses (3S)-hydroxyhexadecanoyl-CoA + NAD(+) = 3-oxohexadecanoyl-CoA + NADH + H(+). It functions in the pathway lipid metabolism; fatty acid beta-oxidation. Functionally, mitochondrial fatty acid beta-oxidation enzyme that catalyzes the third step of the beta-oxidation cycle for medium and short-chain 3-hydroxy fatty acyl-CoAs (C4 to C10). Plays a role in the control of insulin secretion by inhibiting the activation of glutamate dehydrogenase 1 (GLUD1), an enzyme that has an important role in regulating amino acid-induced insulin secretion. Plays a role in the maintenance of normal spermatogenesis through the reduction of fatty acid accumulation in the testes. The polypeptide is Hydroxyacyl-coenzyme A dehydrogenase, mitochondrial (HADH) (Sus scrofa (Pig)).